The primary structure comprises 276 residues: NADPH-dependent 7-cyano-7-deazaguanine reductase (276 aa).

83-85 lines the substrate pocket; sequence IES. Residue 85–86 participates in NADPH binding; the sequence is SK. Cysteine 184 functions as the Thioimide intermediate in the catalytic mechanism. Aspartate 191 functions as the Proton donor in the catalytic mechanism. 223–224 is a substrate binding site; sequence HE. 252 to 253 is a binding site for NADPH; sequence RG.

It belongs to the GTP cyclohydrolase I family. QueF type 2 subfamily. In terms of assembly, homodimer.

It localises to the cytoplasm. It carries out the reaction 7-aminomethyl-7-carbaguanine + 2 NADP(+) = 7-cyano-7-deazaguanine + 2 NADPH + 3 H(+). It functions in the pathway tRNA modification; tRNA-queuosine biosynthesis. Its function is as follows. Catalyzes the NADPH-dependent reduction of 7-cyano-7-deazaguanine (preQ0) to 7-aminomethyl-7-deazaguanine (preQ1). The chain is NADPH-dependent 7-cyano-7-deazaguanine reductase from Pseudomonas syringae pv. tomato (strain ATCC BAA-871 / DC3000).